Here is an 804-residue protein sequence, read N- to C-terminus: Elongation factor G, mitochondrial (804 aa).

Residues 1-9 constitute a mitochondrion transit peptide; sequence MVRPAQVRA. One can recognise a tr-type G domain in the interval 103–389; that stretch reads SKVRNIGIAA…GVCDYLPNPS (287 aa). Residues 112–119, 187–191, and 241–244 contribute to the GTP site; these read AHIDSGKT, DTPGH, and NKMD.

It belongs to the TRAFAC class translation factor GTPase superfamily. Classic translation factor GTPase family. EF-G/EF-2 subfamily.

The protein localises to the mitochondrion. It participates in protein biosynthesis; polypeptide chain elongation. Its function is as follows. Mitochondrial GTPase that catalyzes the GTP-dependent ribosomal translocation step during translation elongation. During this step, the ribosome changes from the pre-translocational (PRE) to the post-translocational (POST) state as the newly formed A-site-bound peptidyl-tRNA and P-site-bound deacylated tRNA move to the P and E sites, respectively. Catalyzes the coordinated movement of the two tRNA molecules, the mRNA and conformational changes in the ribosome. The polypeptide is Elongation factor G, mitochondrial (mef1) (Talaromyces stipitatus (strain ATCC 10500 / CBS 375.48 / QM 6759 / NRRL 1006) (Penicillium stipitatum)).